A 209-amino-acid chain; its full sequence is LexA repressor (209 aa).

Positions 30–50 form a DNA-binding region, H-T-H motif; it reads RVEIAREIGFKSPNAAEEHLK. Residues Ser-126 and Lys-163 each act as for autocatalytic cleavage activity in the active site.

Belongs to the peptidase S24 family. Homodimer.

It carries out the reaction Hydrolysis of Ala-|-Gly bond in repressor LexA.. Represses a number of genes involved in the response to DNA damage (SOS response), including recA and lexA. In the presence of single-stranded DNA, RecA interacts with LexA causing an autocatalytic cleavage which disrupts the DNA-binding part of LexA, leading to derepression of the SOS regulon and eventually DNA repair. The sequence is that of LexA repressor from Glaesserella parasuis serovar 5 (strain SH0165) (Haemophilus parasuis).